The chain runs to 303 residues: Probable alpha-L-glutamate ligase (303 aa).

The ATP-grasp domain occupies 104–287 (LQLLAREGID…IAGMMIEFIE (184 aa)). ATP is bound by residues Lys141, 178-179 (EY), Asp187, and 211-213 (RSN). Asp248, Glu260, and Asn262 together coordinate Mg(2+). Positions 248, 260, and 262 each coordinate Mn(2+).

Belongs to the RimK family. It depends on Mg(2+) as a cofactor. Requires Mn(2+) as cofactor.

This Pectobacterium carotovorum subsp. carotovorum (strain PC1) protein is Probable alpha-L-glutamate ligase.